Consider the following 330-residue polypeptide: (4-{4-[2-(gamma-L-glutamylamino)ethyl]phenoxymethyl}furan-2-yl)methanamine synthase (330 aa).

It belongs to the MfnF family.

The enzyme catalyses gamma-L-glutamyltyramine + [5-(aminomethyl)furan-3-yl]methyl diphosphate = (4-{4-[2-(gamma-L-glutamylamino)ethyl]phenoxymethyl}furan-2-yl)methanamine + diphosphate. It functions in the pathway cofactor biosynthesis; methanofuran biosynthesis. In terms of biological role, catalyzes the condensation between 5-(aminomethyl)-3-furanmethanol diphosphate (F1-PP) and gamma-glutamyltyramine to produce APMF-Glu. This Methanocaldococcus jannaschii (strain ATCC 43067 / DSM 2661 / JAL-1 / JCM 10045 / NBRC 100440) (Methanococcus jannaschii) protein is (4-{4-[2-(gamma-L-glutamylamino)ethyl]phenoxymethyl}furan-2-yl)methanamine synthase.